Consider the following 411-residue polypeptide: MSLTLWSGVNPENARTHKLLAAAALANVAVTLKACEYGRENETAEYCRNCSPCGRYPVLQTEEGCVFESNAILRHIARLDRSGGFLYGRTPLEGSQVDMWLDFSATELDAASEPFVHHAFRGEPLPANAMDRVHEVLRALEAWLETRTFLVGERMTVADVAVAFALQWHYRLNGAEGEALTKKYRNAYRMYNTVMQQPKTVEVLRSQGATFGAREGGAKGQGRGCARPGREEAERAAAAADGAEEEDEAPREKKKPNPLDELPPSPFVLDAFKREYSNTDTRTVAAPYFFQHYDAAGYTTFWCRYKYNEDNKMQFMTANLIRGWFQRMEHVRKYAFGVALIIGEERRHDIVALWVFRGRGMPAIVEDVEDTELFDWEEVADVAAQRERITDYLSWEGPTIPRPVLEGRVFK.

One can recognise a GST N-terminal domain in the interval 3–84; the sequence is LTLWSGVNPE…HIARLDRSGG (82 aa). The GST C-terminal domain occupies 90 to 216; it reads TPLEGSQVDM…QGATFGAREG (127 aa). The tract at residues 212 to 265 is disordered; it reads GAREGGAKGQGRGCARPGREEAERAAAAADGAEEEDEAPREKKKPNPLDELPPS. Positions 214–223 are enriched in gly residues; that stretch reads REGGAKGQGR. The EF-1-gamma C-terminal domain occupies 255 to 411; that stretch reads KPNPLDELPP…RPVLEGRVFK (157 aa).

In terms of assembly, EF-1 is composed of four subunits: alpha, beta, delta, and gamma.

Its function is as follows. Probably plays a role in anchoring the complex to other cellular components. The chain is Elongation factor 1-gamma from Trypanosoma cruzi.